Here is a 28-residue protein sequence, read N- to C-terminus: Potassium channel toxin alpha-KTx 9.7 (28 aa).

3 disulfide bridges follow: cysteine 3-cysteine 19, cysteine 6-cysteine 24, and cysteine 10-cysteine 26.

Expressed by the venom gland.

It is found in the secreted. Its function is as follows. Calcium channel activator. Rapidly and reversibly activates ryanodine receptor 1 (RYR1). The polypeptide is Potassium channel toxin alpha-KTx 9.7 (Hottentotta judaicus (Black scorpion)).